We begin with the raw amino-acid sequence, 131 residues long: FTQRRMKLGFTQADVGLALGTLYGNVFSQTTICRFEALQLSFKNMCKLKPLLNKWLEEADSSTGSPTSIDKIAAQGRKRKKRTSIEVSVKGALESHFLKCPKPSAQEITNLADSLQLEKEVVRVWFCNNLQ.

Residues 1 to 60 (FTQRRMKLGFTQADVGLALGTLYGNVFSQTTICRFEALQLSFKNMCKLKPLLNKWLEEAD) form the POU-specific domain. The homeobox DNA-binding region spans 78 to 131 (KRKKRTSIEVSVKGALESHFLKCPKPSAQEITNLADSLQLEKEVVRVWFCNNLQ).

Belongs to the POU transcription factor family. Class-3 subfamily. Homodimer. In terms of tissue distribution, brain.

It is found in the nucleus. In terms of biological role, transcription factor that acts synergistically with SOX11 and SOX4. Plays a role in neuronal development. Is implicated in an enhancer activity at the embryonic met-mesencephalic junction; the enhancer element contains the octamer motif (5'-ATTTGCAT-3'). This chain is POU domain, class 3, transcription factor 3 (POU3F3), found in Sus scrofa (Pig).